The following is a 101-amino-acid chain: MKLLIFAVIISVVLFPVLVSSRTIKCDQLSGKCINGEEKEIMNMRLGLDVSSRRILQASRYISYEALKKNLPDNRRGEPDQRDNPYRRSCDVHSHCYRFTN.

A signal peptide spans 1–21 (MKLLIFAVIISVVLFPVLVSS). Positions 22 to 56 (RTIKCDQLSGKCINGEEKEIMNMRLGLDVSSRRIL) are cleaved as a propeptide — removed in mature form. A disulfide bridge connects residues cysteine 90 and cysteine 96.

The protein belongs to the plant rapid alkalinization factor (RALF) family. Post-translationally, proteolytically cleaved, probably by S1P, a subtilisin-like serine protease (subtilase).

The protein localises to the secreted. Functionally, cell signaling peptide that may regulate plant stress, growth, and development. Mediates a rapid alkalinization of extracellular space by mediating a transient increase in the cytoplasmic Ca(2+) concentration leading to a calcium-dependent signaling events through a cell surface receptor and a concomitant activation of some intracellular mitogen-activated protein kinases. The chain is Protein RALF-like 14 (RALFL14) from Arabidopsis thaliana (Mouse-ear cress).